The primary structure comprises 135 residues: Putative hydrolase EbsB (135 aa).

The 128-residue stretch at 1-128 folds into the RNase H type-1 domain; the sequence is MLRIYVDAAT…ADMLARQALQ (128 aa). Mg(2+)-binding residues include Asp-7, Glu-45, Asp-71, and Asp-120.

Belongs to the RNase H family. EbsB subfamily. The cofactor is Mg(2+).

It is found in the secreted. Its subcellular location is the cell wall. Its function is as follows. Seems to play some role in the cell surface expression of a chromosomally encoded receptor, named enterococcal binding substance (EBS), that mediates mating aggregate formation. Might interfere with the synthesis or assembly of EBS and function as a cell wall hydrolase. This chain is Putative hydrolase EbsB, found in Enterococcus faecalis (strain ATCC 700802 / V583).